A 367-amino-acid polypeptide reads, in one-letter code: D-alanine--D-alanine ligase (367 aa).

The 207-residue stretch at 145–351 (KRLLRDAGLP…QPALMDALIA (207 aa)) folds into the ATP-grasp domain. 174-229 (HAVGCSELFIKPANLGSSVGISKARTPQEFAAACDLALRFDGKILIERCISPVREI) provides a ligand contact to ATP. Asp306, Glu318, and Asn320 together coordinate Mg(2+).

This sequence belongs to the D-alanine--D-alanine ligase family. Requires Mg(2+) as cofactor. The cofactor is Mn(2+).

The protein resides in the cytoplasm. The catalysed reaction is 2 D-alanine + ATP = D-alanyl-D-alanine + ADP + phosphate + H(+). The protein operates within cell wall biogenesis; peptidoglycan biosynthesis. Cell wall formation. The chain is D-alanine--D-alanine ligase from Bradyrhizobium sp. (strain BTAi1 / ATCC BAA-1182).